The following is a 186-amino-acid chain: Ribosome-recycling factor (186 aa).

It belongs to the RRF family.

Its subcellular location is the cytoplasm. Responsible for the release of ribosomes from messenger RNA at the termination of protein biosynthesis. May increase the efficiency of translation by recycling ribosomes from one round of translation to another. This chain is Ribosome-recycling factor, found in Rickettsia typhi (strain ATCC VR-144 / Wilmington).